The following is a 298-amino-acid chain: MPVISLAQMLESGVHFGHQARRWNPKMDPYIFTERNGVHIIDLVQTAQLMDEAYHYVRSASESGKKFLFVGTKRQAAGIIAQEAARCGGYYVNQRWLGGMLTNWTTIKTRIERLKDLERRYESGIFDLLPKQEASMLRRELDKLQKYLGGLKQMHKIPDVVVIIDIRREYNAVQECQKLGLPIVSLLDTNCDPDWVDIPIPANDDAIRSIKLIIGKLADAIYEGRHGQVSAETFEGDDIPSAIDFEDETPEPVAEVADAEVAAAEPVAEAAPTAEAAPEEAPAEDAAPTAEAEEPAAE.

Residues 232 to 298 are disordered; that stretch reads ETFEGDDIPS…TAEAEEPAAE (67 aa). The segment covering 234–250 has biased composition (acidic residues); it reads FEGDDIPSAIDFEDETP. The segment covering 251–276 has biased composition (low complexity); the sequence is EPVAEVADAEVAAAEPVAEAAPTAEA.

The protein belongs to the universal ribosomal protein uS2 family.

This Acaryochloris marina (strain MBIC 11017) protein is Small ribosomal subunit protein uS2.